The chain runs to 197 residues: GTP cyclohydrolase 1 (197 aa).

3 residues coordinate Zn(2+): Cys88, His91, and Cys160.

It belongs to the GTP cyclohydrolase I family. As to quaternary structure, homomer.

It carries out the reaction GTP + H2O = 7,8-dihydroneopterin 3'-triphosphate + formate + H(+). It participates in cofactor biosynthesis; 7,8-dihydroneopterin triphosphate biosynthesis; 7,8-dihydroneopterin triphosphate from GTP: step 1/1. This chain is GTP cyclohydrolase 1, found in Clostridium beijerinckii (strain ATCC 51743 / NCIMB 8052) (Clostridium acetobutylicum).